The chain runs to 92 residues: Large ribosomal subunit protein eL43 (92 aa).

The C4-type zinc finger occupies 39–60 (CDFCGKYGMKRKAVGIWSCKGC).

It belongs to the eukaryotic ribosomal protein eL43 family.

This chain is Large ribosomal subunit protein eL43 (RPL37a), found in Ostreococcus lucimarinus (strain CCE9901).